Here is a 279-residue protein sequence, read N- to C-terminus: Osmoprotective compounds uptake permease protein GgtC (279 aa).

7 consecutive transmembrane segments (helical) span residues 7-27, 58-78, 90-110, 120-140, 146-166, 202-222, and 247-267; these read LLFL…LSFF, LWLV…AVLV, IIFL…KFVY, IGLL…WLVE, FALI…ILSA, LLVV…IVFV, and FGRG…VMIT. One can recognise an ABC transmembrane type-1 domain in the interval 53 to 270; it reads FRNNLLWLVL…IVPVMITNIR (218 aa).

It belongs to the binding-protein-dependent transport system permease family. In terms of assembly, the complex is composed of two ATP-binding proteins (GgtA), two transmembrane proteins (GgtC and GgtD) and a solute-binding protein (GgtB).

Its subcellular location is the cell membrane. In terms of biological role, part of the ABC transporter complex GgtABCD involved in the uptake of the osmoprotective compounds glucosylglycerol (GG), sucrose and trehalose. Responsible for the translocation of the substrate across the membrane. The chain is Osmoprotective compounds uptake permease protein GgtC from Synechocystis sp. (strain ATCC 27184 / PCC 6803 / Kazusa).